A 132-amino-acid polypeptide reads, in one-letter code: Small ribosomal subunit protein uS8 (132 aa).

The protein belongs to the universal ribosomal protein uS8 family. As to quaternary structure, part of the 30S ribosomal subunit. Contacts proteins S5 and S12.

One of the primary rRNA binding proteins, it binds directly to 16S rRNA central domain where it helps coordinate assembly of the platform of the 30S subunit. The chain is Small ribosomal subunit protein uS8 from Beijerinckia indica subsp. indica (strain ATCC 9039 / DSM 1715 / NCIMB 8712).